The following is a 251-amino-acid chain: Cell division protein ZapD (251 aa).

It belongs to the ZapD family. Interacts with FtsZ.

The protein resides in the cytoplasm. Functionally, cell division factor that enhances FtsZ-ring assembly. Directly interacts with FtsZ and promotes bundling of FtsZ protofilaments, with a reduction in FtsZ GTPase activity. The chain is Cell division protein ZapD from Burkholderia thailandensis (strain ATCC 700388 / DSM 13276 / CCUG 48851 / CIP 106301 / E264).